The following is a 24-amino-acid chain: Brevinin-1CSa (24 aa).

Cys-18 and Cys-24 are joined by a disulfide.

In terms of tissue distribution, expressed by the skin glands.

Its subcellular location is the secreted. It localises to the target cell membrane. Functionally, antibacterial peptide. Has activity against the Gram-positive bacterium S.aureus (MIC=2 uM) and the Gram-negative bacterium E.coli (MIC=32 uM). Has a strong hemolytic activity (LC(50)=5 uM). The protein is Brevinin-1CSa of Rana cascadae (Cascades frog).